A 229-amino-acid chain; its full sequence is Aldehyde oxidoreductase iron-sulfur-binding subunit PaoA (229 aa).

Positions 1 to 21 are disordered; the sequence is MSNQGEYPEDNRVGKHEPHDL. Residues 1 to 53 constitute a signal peptide (tat-type signal); that stretch reads MSNQGEYPEDNRVGKHEPHDLSLTRRDLIKVSAATAATAVVYPHSTLAASVPA. Residues 9-21 show a composition bias toward basic and acidic residues; sequence EDNRVGKHEPHDL. A 2Fe-2S ferredoxin-type domain is found at 61-137; the sequence is MPLTLKVNGK…GAEITTIEGL (77 aa). The [2Fe-2S] cluster site is built by C99, C104, G105, C107, C119, C158, C161, C208, and C210.

In terms of assembly, heterotrimer composed of PaoA, PaoB and PaoC. Requires [2Fe-2S] cluster as cofactor. Post-translationally, exported by the Tat system. The position of the signal peptide cleavage has not been experimentally proven.

The protein resides in the periplasm. The catalysed reaction is an aldehyde + A + H2O = a carboxylate + AH2 + H(+). Its activity is regulated as follows. The complex requires PaoD for activity. Its function is as follows. Oxidizes aldehydes to the corresponding carboxylic acids with a preference for aromatic aldehydes. It might play a role in the detoxification of aldehydes to avoid cell damage. This Escherichia coli (strain K12) protein is Aldehyde oxidoreductase iron-sulfur-binding subunit PaoA.